A 737-amino-acid chain; its full sequence is Photosystem I P700 chlorophyll a apoprotein A2 (737 aa).

Helical transmembrane passes span 46 to 69 (IFAS…FHVA), 135 to 158 (LYNG…LHLQ), 175 to 199 (LNHH…HVAI), 273 to 291 (IAHH…GHMY), 330 to 353 (LHFQ…QHMY), 369 to 395 (AALY…IFLV), 417 to 439 (AIIS…LYVH), and 520 to 538 (FLVH…LILV). [4Fe-4S] cluster is bound by residues Cys562 and Cys571. 2 helical membrane passes run 578 to 599 (AFYL…YWHW) and 646 to 668 (LSVW…MFLI). Positions 657, 665, and 673 each coordinate chlorophyll a. Trp674 contacts phylloquinone. The helical transmembrane segment at 710-730 (LVGLAHFAVGYIVTYAAFLIA) threads the bilayer.

Belongs to the PsaA/PsaB family. In terms of assembly, the PsaA/B heterodimer binds the P700 chlorophyll special pair and subsequent electron acceptors. PSI consists of a core antenna complex that captures photons, and an electron transfer chain that converts photonic excitation into a charge separation. The eukaryotic PSI reaction center is composed of at least 11 subunits. It depends on P700 is a chlorophyll a/chlorophyll a' dimer, A0 is one or more chlorophyll a, A1 is one or both phylloquinones and FX is a shared 4Fe-4S iron-sulfur center. as a cofactor.

It is found in the plastid. The protein localises to the cyanelle thylakoid membrane. The enzyme catalyses reduced [plastocyanin] + hnu + oxidized [2Fe-2S]-[ferredoxin] = oxidized [plastocyanin] + reduced [2Fe-2S]-[ferredoxin]. Functionally, psaA and PsaB bind P700, the primary electron donor of photosystem I (PSI), as well as the electron acceptors A0, A1 and FX. PSI is a cytochrome c6-ferredoxin oxidoreductase, converting photonic excitation into a charge separation, which transfers an electron from the donor P700 chlorophyll pair to the spectroscopically characterized acceptors A0, A1, FX, FA and FB in turn. Oxidized P700 is reduced on the lumenal side of the thylakoid membrane by cytochrome c6. In Cyanophora paradoxa, this protein is Photosystem I P700 chlorophyll a apoprotein A2.